The primary structure comprises 212 residues: MRVRNRKGATELLEAHPQYVILNPADAKGRWQEIFGNDHPIHVEVGSGKGAFVSGMAKANPEINYIGIDIQKSVLSYALDKVLATDVPNIKLLWVDGSDLTDYFEEGEIDRLYLNFSDPWPKKRHEKRRLTYQSFLATYQQILPENGEIHFKTDNRGLFEYSLVSFSQYGMKLKGVWLDLHASDFEDNVLTEYEQKFANKGQVIYRVEAAFE.

S-adenosyl-L-methionine contacts are provided by Glu44, Asp69, Asp96, and Asp118. Asp118 is an active-site residue. Lys122 provides a ligand contact to substrate. The segment at Arg124–Arg129 is interaction with RNA. Substrate-binding positions include Asp154 and Thr191–Glu194.

Belongs to the class I-like SAM-binding methyltransferase superfamily. TrmB family.

The enzyme catalyses guanosine(46) in tRNA + S-adenosyl-L-methionine = N(7)-methylguanosine(46) in tRNA + S-adenosyl-L-homocysteine. It functions in the pathway tRNA modification; N(7)-methylguanine-tRNA biosynthesis. In terms of biological role, catalyzes the formation of N(7)-methylguanine at position 46 (m7G46) in tRNA. The protein is tRNA (guanine-N(7)-)-methyltransferase of Streptococcus sanguinis (strain SK36).